A 901-amino-acid polypeptide reads, in one-letter code: Protein translocase subunit SecA (901 aa).

ATP is bound by residues glutamine 87, 105-109 (GEGKT), and aspartate 512. The disordered stretch occupies residues 855-891 (QQLSHQDDETAAAAALAEQTGERKVGRNDPCPCGSGK). 4 residues coordinate Zn(2+): cysteine 885, cysteine 887, cysteine 896, and histidine 897.

Belongs to the SecA family. As to quaternary structure, monomer and homodimer. Part of the essential Sec protein translocation apparatus which comprises SecA, SecYEG and auxiliary proteins SecDF-YajC and YidC. It depends on Zn(2+) as a cofactor.

It is found in the cell inner membrane. It localises to the cytoplasm. It catalyses the reaction ATP + H2O + cellular proteinSide 1 = ADP + phosphate + cellular proteinSide 2.. Part of the Sec protein translocase complex. Interacts with the SecYEG preprotein conducting channel. Has a central role in coupling the hydrolysis of ATP to the transfer of proteins into and across the cell membrane, serving both as a receptor for the preprotein-SecB complex and as an ATP-driven molecular motor driving the stepwise translocation of polypeptide chains across the membrane. This chain is Protein translocase subunit SecA, found in Cronobacter sakazakii (strain ATCC BAA-894) (Enterobacter sakazakii).